The chain runs to 530 residues: Probable histone-arginine methyltransferase CARMER (530 aa).

The SAM-dependent MTase PRMT-type domain occupies 141-450; the sequence is ASQYFQFYGY…QSYDVTIDLH (310 aa). The S-adenosyl-L-methionine site is built by Q154, R163, G187, E209, E238, and T266. R501 carries the asymmetric dimethylarginine; by autocatalysis modification.

Belongs to the class I-like SAM-binding methyltransferase superfamily. Protein arginine N-methyltransferase family. In terms of assembly, homodimer. Interacts with EcR. Post-translationally, the dimethylated protein is the major form. In terms of tissue distribution, present ubiquitously (at protein level). Expressed in the imaginal disks and in larval brains, and to a much lesser degree in the polytene larval tissue such as salivary glands.

The protein localises to the cytoplasm. The protein resides in the nucleus. The catalysed reaction is L-arginyl-[protein] + 2 S-adenosyl-L-methionine = N(omega),N(omega)-dimethyl-L-arginyl-[protein] + 2 S-adenosyl-L-homocysteine + 2 H(+). Functionally, methylates (mono- and asymmetric dimethylation) the guanidino nitrogens of arginyl residues in proteins. May methylate histone H3 at 'Arg-17' and activate transcription via chromatin remodeling. Coordinates ecdysone-mediated expression of cell death genes. This Drosophila melanogaster (Fruit fly) protein is Probable histone-arginine methyltransferase CARMER (Art4).